The primary structure comprises 330 residues: Mas-related G-protein coupled receptor member X2 (330 aa).

Over 1 to 33 the chain is Extracellular; sequence MDPTTPAWGTESTTMNGNDQALPLLCGKETLIL. Residues 34–54 traverse the membrane as a helical segment; sequence VLLILFIALVGLVGNAFVLWL. Topologically, residues 55–63 are cytoplasmic; the sequence is LGFRMRRNA. Residues 64-84 traverse the membrane as a helical segment; that stretch reads FSVYVLSLAGADFLFLCFPMI. The Extracellular segment spans residues 85–96; the sequence is NCLEYLINFFHS. A helical transmembrane segment spans residues 97-117; it reads ISINFPSFFTTVMTCAYLAGL. Residues 118–144 lie on the Cytoplasmic side of the membrane; that stretch reads SMLSAISTERCLSVLWPIWYRCRRPRH. A helical membrane pass occupies residues 145–165; the sequence is LSAVLCVLLWALSLLLSILEG. Topologically, residues 166–184 are extracellular; sequence KFCGLLFSDGDSGWCQTFD. Residues 185–205 form a helical membrane-spanning segment; that stretch reads FITAAWLMFLFVVLCGSSLAL. At 206–228 the chain is on the cytoplasmic side; it reads LVRILCGSQGLPLTRLYLTILLT. A helical transmembrane segment spans residues 229 to 249; that stretch reads VLIFLLCGLPFGIQWFLILWI. The Extracellular segment spans residues 250–264; that stretch reads WKNSDVLFCHIHPVS. A helical transmembrane segment spans residues 265-285; it reads VVLSSFNSSANPIIYFFVGSF. At 286-330 the chain is on the cytoplasmic side; sequence RKQWRLRQPVLKLALQRALQDTAEVDHSEGCFSQGTLEMSGSSLV.

It belongs to the G-protein coupled receptor 1 family. Mas subfamily.

The protein localises to the cell membrane. In terms of biological role, mast cell-specific receptor for basic secretagogues, i.e. cationic amphiphilic drugs, as well as endo- or exogenous peptides, consisting of a basic head group and a hydrophobic core. Recognizes and binds small molecules containing a cyclized tetrahydroisoquinoline (THIQ), such as non-steroidal neuromuscular blocking drugs (NMBDs), including tubocurarine and atracurium. In response to these compounds, mediates pseudo-allergic reactions characterized by histamine release, inflammation and airway contraction. The protein is Mas-related G-protein coupled receptor member X2 (MRGPRX2) of Rhinopithecus bieti (Black snub-nosed monkey).